The sequence spans 208 residues: Hypoxanthine-guanine phosphoribosyltransferase (208 aa).

GMP contacts are provided by residues K63, 122–130 (EDIVDSAIT), K154, and D182. D126 acts as the Proton acceptor in catalysis. Position 182 (D182) interacts with Mg(2+).

It belongs to the purine/pyrimidine phosphoribosyltransferase family. It depends on Mg(2+) as a cofactor.

Its subcellular location is the cytoplasm. The enzyme catalyses IMP + diphosphate = hypoxanthine + 5-phospho-alpha-D-ribose 1-diphosphate. It catalyses the reaction GMP + diphosphate = guanine + 5-phospho-alpha-D-ribose 1-diphosphate. It participates in purine metabolism; IMP biosynthesis via salvage pathway; IMP from hypoxanthine: step 1/1. In terms of biological role, converts guanine to guanosine monophosphate, and hypoxanthine to inosine monophosphate. Transfers the 5-phosphoribosyl group from 5-phosphoribosylpyrophosphate onto the purine. Plays a central role in the generation of purine nucleotides through the purine salvage pathway. The chain is Hypoxanthine-guanine phosphoribosyltransferase (HGPRT) from Crithidia fasciculata.